Consider the following 233-residue polypeptide: Probable tetraheme cytochrome c-type (233 aa).

Residues 1-28 (MTRLQKGSIGTLLTGALLGIVLVAVVFG) form the signal peptide. Positions 39, 42, 45, 67, 70, 71, 93, 131, 134, 135, 159, 162, 163, and 168 each coordinate heme. Positions 182 to 233 (QGKLVLKPEDDGDDEEADEDEDEETEEADDSSDSESASSSDNSDNEDDNNDE) are disordered. 2 stretches are compositionally biased toward acidic residues: residues 191-214 (DDGD…DSSD) and 224-233 (SDNEDDNNDE).

This sequence belongs to the NapC/NirT/NrfH family. Post-translationally, binds 4 heme groups per subunit.

It localises to the periplasm. This chain is Probable tetraheme cytochrome c-type (cycX1), found in Nitrosomonas europaea (strain ATCC 19718 / CIP 103999 / KCTC 2705 / NBRC 14298).